A 685-amino-acid chain; its full sequence is Methionine--tRNA ligase (685 aa).

Positions 15–25 match the 'HIGH' region motif; the sequence is PYANGPIHLGH. 4 residues coordinate Zn(2+): C146, C149, C159, and C162. The short motif at 331-335 is the 'KMSKS' region element; the sequence is KMSKS. K334 serves as a coordination point for ATP. The tRNA-binding domain maps to 583–685; sequence DFAKMDLRVA…AGVKAGSRVK (103 aa).

The protein belongs to the class-I aminoacyl-tRNA synthetase family. MetG type 1 subfamily. In terms of assembly, homodimer. Zn(2+) is required as a cofactor.

It is found in the cytoplasm. It carries out the reaction tRNA(Met) + L-methionine + ATP = L-methionyl-tRNA(Met) + AMP + diphosphate. Its function is as follows. Is required not only for elongation of protein synthesis but also for the initiation of all mRNA translation through initiator tRNA(fMet) aminoacylation. The sequence is that of Methionine--tRNA ligase from Actinobacillus succinogenes (strain ATCC 55618 / DSM 22257 / CCUG 43843 / 130Z).